We begin with the raw amino-acid sequence, 454 residues long: L-cysteine desulfhydrase-like protein lolT1 (454 aa).

The residue at position 227 (K227) is an N6-(pyridoxal phosphate)lysine.

It belongs to the class-V pyridoxal-phosphate-dependent aminotransferase family. Pyridoxal 5'-phosphate serves as cofactor.

The protein operates within alkaloid biosynthesis. L-cysteine desulfhydrase-like protein; part of the gene cluster that mediates the biosynthesis of loline alkaloids, potent insecticidal agents composed of a pyrrolizidine ring system and an uncommon ether bridge linking carbons 2 and 7. Lolines are structurally differentiated by the various modifications of the L-amino group and include norloline, loline, N-methylloline, N-acetylloline, N-acetylnorloline, and N-formylloline. The first committed step is the condensation of O-acetyl-L-homoserine (derived from L-aspartic acid) and L-proline, probably catalyzed by the gamma-type pyridoxal 5'-phosphate(PLP)-dependent enzyme lolC, to give the diamino diacid, NACPP. Ensuing cyclization, decarboxylation, and acetylation steps yield 1-exo-acetamidopyrrolizidine (AcAP). LolO is required for installation of the ether bridge upon the pathway intermediate, 1-exo-acetamidopyrrolizidine (AcAP). In sequential 2-oxoglutarate- and O(2)-consuming steps, lolO removes hydrogens from C2 and C7 of AcAP to form both carbon-oxygen bonds in N-acetylnorloline (NANL), the precursor to all other lolines. The enzymes lolD, lolE, lolF and lolT have also been proposed to be involved in the ether-bridge installation. Further processing of the exocyclic moiety of NANL by fungal N-acetamidase (LolN), methyltransferase (LolM), and cytochrome P450 (LolP) enzymes, with occasional involvement of a plant acetyltransferase, generates the other known lolines. LolN transforms NANL to norlonine which is monomethylated and dimethylated to respectively lonine and N-methyllonine (NML) by lolM. LolP catalyzes hydroxylation of the methyl group in N-methylloline (NML) and further oxygenation to N-formylloline (NFL). A plant acetyltransferase is responsible for the acetylation of loline to form N-acetylloline (NAL). LolA might interact with aspartate kinase to prevent feedback inhibition of its activity by these end products and thereby promote production of L-homoserine from L-aspartate. This Epichloe uncinata (Endophyte fungus) protein is L-cysteine desulfhydrase-like protein lolT1.